Consider the following 269-residue polypeptide: 2-dehydro-3-deoxyphosphooctonate aldolase (269 aa).

It belongs to the KdsA family.

It localises to the cytoplasm. The catalysed reaction is D-arabinose 5-phosphate + phosphoenolpyruvate + H2O = 3-deoxy-alpha-D-manno-2-octulosonate-8-phosphate + phosphate. Its pathway is carbohydrate biosynthesis; 3-deoxy-D-manno-octulosonate biosynthesis; 3-deoxy-D-manno-octulosonate from D-ribulose 5-phosphate: step 2/3. The protein operates within bacterial outer membrane biogenesis; lipopolysaccharide biosynthesis. This chain is 2-dehydro-3-deoxyphosphooctonate aldolase, found in Chlamydia caviae (strain ATCC VR-813 / DSM 19441 / 03DC25 / GPIC) (Chlamydophila caviae).